The following is a 1356-amino-acid chain: DNA-directed RNA polymerase subunit beta (1356 aa).

The protein belongs to the RNA polymerase beta chain family. As to quaternary structure, the RNAP catalytic core consists of 2 alpha, 1 beta, 1 beta' and 1 omega subunit. When a sigma factor is associated with the core the holoenzyme is formed, which can initiate transcription.

It catalyses the reaction RNA(n) + a ribonucleoside 5'-triphosphate = RNA(n+1) + diphosphate. DNA-dependent RNA polymerase catalyzes the transcription of DNA into RNA using the four ribonucleoside triphosphates as substrates. This is DNA-directed RNA polymerase subunit beta from Caulobacter vibrioides (strain ATCC 19089 / CIP 103742 / CB 15) (Caulobacter crescentus).